The sequence spans 184 residues: ADP-ribosylation factor-like protein 8b (184 aa).

Positions Met1–Gln18 form an intramembrane region, note=Mediates targeting to membranes. Residues Asn29–Ser34, Met48–Thr51, Asp70–Gln74, and Asn129–Asp132 contribute to the GTP site.

The protein belongs to the small GTPase superfamily. Arf family. In terms of assembly, interacts with tubulin.

Its subcellular location is the late endosome membrane. It localises to the lysosome membrane. The protein localises to the cytoplasm. The protein resides in the cytoskeleton. It is found in the spindle. May play a role in lysosome motility. May play a role in chromosome segregation. Its function is as follows. (Microbial infection) Component of tomato mosaic virus (ToMV) RNA replication complexes. Required for tobamovirus multiplication, especially for efficient negative-strand RNA synthesis and viral RNA capping. This is ADP-ribosylation factor-like protein 8b from Arabidopsis thaliana (Mouse-ear cress).